Reading from the N-terminus, the 150-residue chain is Ribonuclease H (150 aa).

One can recognise an RNase H type-1 domain in the interval Met-1 to Ala-146. 4 residues coordinate Mg(2+): Asp-9, Glu-52, Asp-74, and Asp-138.

This sequence belongs to the RNase H family. As to quaternary structure, monomer. Mg(2+) is required as a cofactor.

Its subcellular location is the cytoplasm. The catalysed reaction is Endonucleolytic cleavage to 5'-phosphomonoester.. In terms of biological role, endonuclease that specifically degrades the RNA of RNA-DNA hybrids. The sequence is that of Ribonuclease H from Roseobacter denitrificans (strain ATCC 33942 / OCh 114) (Erythrobacter sp. (strain OCh 114)).